A 130-amino-acid chain; its full sequence is Histone H2A type 2-A (130 aa).

A disordered region spans residues 1 to 22; that stretch reads MSGRGKQGGKARAKAKSRSSRA. Position 2 is an N-acetylserine (S2). Position 2 is a phosphoserine; by RPS6KA5 (S2). Residue R4 is modified to Citrulline; alternate. R4 is subject to Symmetric dimethylarginine; by PRMT5; alternate. N6-(2-hydroxyisobutyryl)lysine; alternate is present on residues K6 and K10. K6 bears the N6-(beta-hydroxybutyryl)lysine; alternate mark. K6 is modified (N6-acetyllysine; alternate). The segment covering 7–19 has biased composition (basic residues); it reads QGGKARAKAKSRS. K10 bears the N6-lactoyllysine; alternate mark. K10 carries the post-translational modification N6-succinyllysine; alternate. Residues K14 and K16 each participate in a glycyl lysine isopeptide (Lys-Gly) (interchain with G-Cter in ubiquitin) cross-link. An N6-(2-hydroxyisobutyryl)lysine; alternate modification is found at K37. N6-(beta-hydroxybutyryl)lysine; alternate is present on K37. K37 is modified (N6-crotonyllysine; alternate). K75 and K76 each carry N6-(2-hydroxyisobutyryl)lysine. K96 is subject to N6-(2-hydroxyisobutyryl)lysine; alternate. K96 carries the N6-succinyllysine; alternate modification. K96 bears the N6-glutaryllysine; alternate mark. The residue at position 100 (K100) is an N6-glutaryllysine. Q105 bears the N5-methylglutamine mark. K119 carries the N6-(2-hydroxyisobutyryl)lysine; alternate modification. K119 and K120 each carry N6-crotonyllysine; alternate. Residues K119 and K120 each carry the N6-glutaryllysine; alternate modification. An N6-(beta-hydroxybutyryl)lysine; alternate modification is found at K120. Residue K120 forms a Glycyl lysine isopeptide (Lys-Gly) (interchain with G-Cter in ubiquitin); alternate linkage. Residue T121 is modified to Phosphothreonine; by DCAF1. N6-(beta-hydroxybutyryl)lysine; alternate is present on K126. K126 bears the N6-crotonyllysine; alternate mark. Residue K126 is modified to N6-glutaryllysine; alternate.

This sequence belongs to the histone H2A family. In terms of assembly, the nucleosome is a histone octamer containing two molecules each of H2A, H2B, H3 and H4 assembled in one H3-H4 heterotetramer and two H2A-H2B heterodimers. The octamer wraps approximately 147 bp of DNA. In terms of processing, deiminated on Arg-4 in granulocytes upon calcium entry. Monoubiquitination of Lys-120 (H2AK119Ub) by RING1, TRIM37 and RNF2/RING2 complex gives a specific tag for epigenetic transcriptional repression and participates in X chromosome inactivation of female mammals. It is involved in the initiation of both imprinted and random X inactivation. Ubiquitinated H2A is enriched in inactive X chromosome chromatin. Ubiquitination of H2A functions downstream of methylation of 'Lys-27' of histone H3 (H3K27me). H2AK119Ub by RNF2/RING2 can also be induced by ultraviolet and may be involved in DNA repair. Following DNA double-strand breaks (DSBs), it is ubiquitinated through 'Lys-63' linkage of ubiquitin moieties by the E2 ligase UBE2N and the E3 ligases RNF8 and RNF168, leading to the recruitment of repair proteins to sites of DNA damage. Ubiquitination at Lys-14 and Lys-16 (H2AK13Ub and H2AK15Ub, respectively) in response to DNA damage is initiated by RNF168 that mediates monoubiquitination at these 2 sites, and 'Lys-63'-linked ubiquitin are then conjugated to monoubiquitin; RNF8 is able to extend 'Lys-63'-linked ubiquitin chains in vitro. H2AK119Ub and ionizing radiation-induced 'Lys-63'-linked ubiquitination (H2AK13Ub and H2AK15Ub) are distinct events. Post-translationally, phosphorylation on Ser-2 (H2AS1ph) is enhanced during mitosis. Phosphorylation on Ser-2 by RPS6KA5/MSK1 directly represses transcription. Acetylation of H3 inhibits Ser-2 phosphorylation by RPS6KA5/MSK1. Phosphorylation at Thr-121 (H2AT120ph) by DCAF1 is present in the regulatory region of many tumor suppresor genes and down-regulates their transcription. In terms of processing, symmetric dimethylation on Arg-4 by the PRDM1/PRMT5 complex may play a crucial role in the germ-cell lineage. Glutamine methylation at Gln-105 (H2AQ104me) by FBL is specifically dedicated to polymerase I. It is present at 35S ribosomal DNA locus and impairs binding of the FACT complex. Post-translationally, crotonylation (Kcr) is specifically present in male germ cells and marks testis-specific genes in post-meiotic cells, including X-linked genes that escape sex chromosome inactivation in haploid cells. Crotonylation marks active promoters and enhancers and confers resistance to transcriptional repressors. It is also associated with post-meiotically activated genes on autosomes. In terms of processing, hydroxybutyrylation of histones is induced by starvation. Lactylated in macrophages by EP300/P300 by using lactoyl-CoA directly derived from endogenous or exogenous lactate, leading to stimulates gene transcription.

It localises to the nucleus. It is found in the chromosome. In terms of biological role, core component of nucleosome. Nucleosomes wrap and compact DNA into chromatin, limiting DNA accessibility to the cellular machineries which require DNA as a template. Histones thereby play a central role in transcription regulation, DNA repair, DNA replication and chromosomal stability. DNA accessibility is regulated via a complex set of post-translational modifications of histones, also called histone code, and nucleosome remodeling. The chain is Histone H2A type 2-A (Hist2h2aa1) from Mus musculus (Mouse).